The sequence spans 67 residues: Sec-independent protein translocase protein TatA (67 aa).

A helical membrane pass occupies residues 1–21 (MGSFSLTHWIIVLIIVVLIFG). The segment at 43–67 (LNEGTDGKEAQKDDVIEHKKDEDKA) is disordered. Positions 47 to 67 (TDGKEAQKDDVIEHKKDEDKA) are enriched in basic and acidic residues.

This sequence belongs to the TatA/E family. As to quaternary structure, the Tat system comprises two distinct complexes: a TatABC complex, containing multiple copies of TatA, TatB and TatC subunits, and a separate TatA complex, containing only TatA subunits. Substrates initially bind to the TatABC complex, which probably triggers association of the separate TatA complex to form the active translocon.

The protein localises to the cell inner membrane. Part of the twin-arginine translocation (Tat) system that transports large folded proteins containing a characteristic twin-arginine motif in their signal peptide across membranes. TatA could form the protein-conducting channel of the Tat system. In Neisseria gonorrhoeae (strain ATCC 700825 / FA 1090), this protein is Sec-independent protein translocase protein TatA.